The primary structure comprises 289 residues: Ribosomal protein L11 methyltransferase (289 aa).

S-adenosyl-L-methionine is bound by residues Thr-142, Gly-163, Asp-185, and Asn-226.

This sequence belongs to the methyltransferase superfamily. PrmA family.

Its subcellular location is the cytoplasm. It catalyses the reaction L-lysyl-[protein] + 3 S-adenosyl-L-methionine = N(6),N(6),N(6)-trimethyl-L-lysyl-[protein] + 3 S-adenosyl-L-homocysteine + 3 H(+). Methylates ribosomal protein L11. The sequence is that of Ribosomal protein L11 methyltransferase from Legionella pneumophila (strain Paris).